Consider the following 736-residue polypeptide: Transcription regulator protein BACH1 (736 aa).

The BTB domain occupies 34 to 100; sequence CDVTIFVEGQ…AYTAKLILSK (67 aa). Position 196 is a phosphoserine (Ser196). Positions 286 to 295 are enriched in basic and acidic residues; sequence MEPEETKKDP. Disordered stretches follow at residues 286 to 312 and 349 to 389; these read MEPEETKKDPASQCPTEKSEVTPFPHN and KPLS…RSSV. 2 positions are modified to phosphoserine: Ser364 and Ser445. In terms of domain architecture, bZIP spans 557-620; that stretch reads CIHDIRRRSK…GETKQNLTGL (64 aa). Residues 562-578 are basic motif; sequence RRRSKNRIAAQRCRKRK. A leucine-zipper region spans residues 582–589; it reads IQNLESEI. Residues 680–719 are disordered; that stretch reads LPPCARGNSEPGYARGQESQQMSTATSEQAGPAEQCRQSG. Positions 696 to 708 are enriched in polar residues; that stretch reads QESQQMSTATSEQ.

The protein belongs to the bZIP family. CNC subfamily. As to quaternary structure, heterodimer of BACH1 and MAFK. Ubiquitinated by the SCF(FBXL17) complex or by the by the SCF(FBXO22) complex, leading to its degradation by the proteasome. Under oxidative stress, reactive oxygen species covalently modify cysteine residues on the bZIP domain of BACH1 and release it from chromatin. If the BTB domain of BACH1 remains intact, its beta1-alpha6 degron is recognized by FBXO22, promoting its ubiquitination and degradation. If the structural integrity of the beta1-alpha6 degron is compromised, FBXL17 will transiently associate with the BACH1 BTB dimer and remodel it into stably bound monomer for ubiquitination and degradation.

It is found in the nucleus. Transcriptional regulator that acts as a repressor or activator, depending on the context. Binds to NF-E2 DNA binding sites. Plays important roles in coordinating transcription activation and repression by MAFK. Together with MAF, represses the transcription of genes under the control of the NFE2L2 oxidative stress pathway. This Homo sapiens (Human) protein is Transcription regulator protein BACH1.